The following is a 134-amino-acid chain: Cytochrome b (134 aa).

3 helical membrane-spanning segments follow: residues 33-53, 77-98, and 113-133; these read FGSL…FLAM, WLLR…YLHV, and WNIG…GYVL. His83 and His97 together coordinate heme b.

The protein belongs to the cytochrome b family. In terms of assembly, the cytochrome bc1 complex contains 11 subunits: 3 respiratory subunits (MT-CYB, CYC1 and UQCRFS1), 2 core proteins (UQCRC1 and UQCRC2) and 6 low-molecular weight proteins (UQCRH/QCR6, UQCRB/QCR7, UQCRQ/QCR8, UQCR10/QCR9, UQCR11/QCR10 and a cleavage product of UQCRFS1). This cytochrome bc1 complex then forms a dimer. The cofactor is heme b.

It localises to the mitochondrion inner membrane. Its function is as follows. Component of the ubiquinol-cytochrome c reductase complex (complex III or cytochrome b-c1 complex) that is part of the mitochondrial respiratory chain. The b-c1 complex mediates electron transfer from ubiquinol to cytochrome c. Contributes to the generation of a proton gradient across the mitochondrial membrane that is then used for ATP synthesis. The polypeptide is Cytochrome b (MT-CYB) (Sturnira tildae (Tilda's yellow-shouldered bat)).